Consider the following 65-residue polypeptide: Hirudin-2B (65 aa).

Residues 1-3 (ITY) are interaction with thrombin active site. 3 cysteine pairs are disulfide-bonded: cysteine 6-cysteine 14, cysteine 16-cysteine 28, and cysteine 22-cysteine 39. A disordered region spans residues 39-65 (CVTGEGTPKPQSHNDGDFEEIPEEYLQ). An O-linked (GalNAc...) threonine glycan is attached at threonine 45. The tract at residues 55-65 (DFEEIPEEYLQ) is interaction with fibrinogen-binding exosite of thrombin. Over residues 55-65 (DFEEIPEEYLQ) the composition is skewed to acidic residues. Sulfotyrosine is present on tyrosine 63.

It belongs to the protease inhibitor I14 (hirudin) family.

It localises to the secreted. Functionally, hirudin is a potent thrombin-specific protease inhibitor. It forms a stable non-covalent complex with alpha-thrombin, thereby abolishing its ability to cleave fibrinogen. In Hirudo medicinalis (Medicinal leech), this protein is Hirudin-2B.